Here is a 220-residue protein sequence, read N- to C-terminus: 7-cyano-7-deazaguanine synthase (220 aa).

7 to 17 (LSGGLDSAVCL) is a binding site for ATP. Zn(2+) is bound by residues Cys191, Cys199, Cys202, and Cys205.

It belongs to the QueC family. Homodimer. The cofactor is Zn(2+).

It catalyses the reaction 7-carboxy-7-deazaguanine + NH4(+) + ATP = 7-cyano-7-deazaguanine + ADP + phosphate + H2O + H(+). The protein operates within purine metabolism; 7-cyano-7-deazaguanine biosynthesis. Functionally, catalyzes the ATP-dependent conversion of 7-carboxy-7-deazaguanine (CDG) to 7-cyano-7-deazaguanine (preQ(0)). This is 7-cyano-7-deazaguanine synthase from Desulforudis audaxviator (strain MP104C).